A 565-amino-acid polypeptide reads, in one-letter code: Mitochondrial distribution and morphology protein 34 (565 aa).

Positions 1–195 (MAFNFNWSPL…LPAIIHRLSL (195 aa)) constitute an SMP-LTD domain. Disordered regions lie at residues 207–236 (EDQD…VDAL), 296–317 (PSDQ…LSRT), and 348–504 (STYG…RQLP). Residues 358 to 370 (RHSKAHARKRKKR) are compositionally biased toward basic residues. Residues 371–381 (VVDLRRPKQPE) show a composition bias toward basic and acidic residues. A compositionally biased stretch (polar residues) spans 382 to 401 (SETASVTDESSFTETTSAPS). Basic and acidic residues-rich tracts occupy residues 446–472 (LRRD…HAEV) and 483–496 (IRHE…EKQE).

This sequence belongs to the MDM34 family. Component of the ER-mitochondria encounter structure (ERMES) or MDM complex, composed of mmm1, mdm10, mdm12 and mdm34.

Its subcellular location is the mitochondrion outer membrane. In terms of biological role, component of the ERMES/MDM complex, which serves as a molecular tether to connect the endoplasmic reticulum (ER) and mitochondria. Components of this complex are involved in the control of mitochondrial shape and protein biogenesis, and function in nonvesicular lipid trafficking between the ER and mitochondria. Mdm34 is required for the interaction of the ER-resident membrane protein mmm1 and the outer mitochondrial membrane-resident beta-barrel protein mdm10. The sequence is that of Mitochondrial distribution and morphology protein 34 from Aspergillus terreus (strain NIH 2624 / FGSC A1156).